The primary structure comprises 230 residues: Large ribosomal subunit protein uL1 (230 aa).

This sequence belongs to the universal ribosomal protein uL1 family. As to quaternary structure, part of the 50S ribosomal subunit.

Binds directly to 23S rRNA. The L1 stalk is quite mobile in the ribosome, and is involved in E site tRNA release. Functionally, protein L1 is also a translational repressor protein, it controls the translation of the L11 operon by binding to its mRNA. The sequence is that of Large ribosomal subunit protein uL1 from Bacillus cereus (strain B4264).